We begin with the raw amino-acid sequence, 364 residues long: Peptidyl-prolyl cis-trans isomerase D (364 aa).

Residues 7 to 170 form the PPIase cyclophilin-type domain; the sequence is YFDITIGNKP…EDAVIAKCGE (164 aa). 3 TPR repeats span residues 208–241, 261–294, and 301–334; these read ATHLKDIGNTYFKKGDHANAAKKYLKAIRYLNEK, IPCYLNRSMCALKLGEYSECVKVTTTVLEYDSKY, and TKAYFRRGSAKMNTRDFEGAIEDFEKAHEKDPED.

It belongs to the cyclophilin-type PPIase family. PPIase D subfamily.

It localises to the cytoplasm. It carries out the reaction [protein]-peptidylproline (omega=180) = [protein]-peptidylproline (omega=0). PPIases accelerate the folding of proteins. It catalyzes the cis-trans isomerization of proline imidic peptide bonds in oligopeptides. In Rhizopus delemar (strain RA 99-880 / ATCC MYA-4621 / FGSC 9543 / NRRL 43880) (Mucormycosis agent), this protein is Peptidyl-prolyl cis-trans isomerase D (cyp12).